Reading from the N-terminus, the 802-residue chain is Cell division cycle 5-like protein (802 aa).

2 consecutive HTH myb-type domains span residues 1–56 and 57–108; these read MPRI…WLDP and SIKK…DKAA. 2 consecutive DNA-binding regions (H-T-H motif) follow at residues 31-54 and 82-104; these read WSRI…YEWL and WRTI…EFLL. The interval 108-143 is disordered; the sequence is AQRDNEEETTDDPRKLKPGEIDPNPETKPARPDPID. Basic and acidic residues predominate over residues 118-127; it reads DDPRKLKPGE. A Glycyl lysine isopeptide (Lys-Gly) (interchain with G-Cter in SUMO2) cross-link involves residue K135. The stretch at 142-245 forms a coiled coil; sequence IDMDEDELEM…DADFRKLRQQ (104 aa). Positions 165–271 match the Nuclear localization signal motif; it reads KKAKRKAREK…KDKQHLKRKK (107 aa). Positions 200-206 are required for interaction with CTNNBL1; the sequence is KKRKKKR. A Glycyl lysine isopeptide (Lys-Gly) (interchain with G-Cter in SUMO2) cross-link involves residue K219. The residue at position 227 (T227) is a Phosphothreonine. The span at 246-262 shows a compositional bias: basic and acidic residues; it reads DLDGELRSEKEGRDRKK. The interval 246–278 is disordered; that stretch reads DLDGELRSEKEGRDRKKDKQHLKRKKESDLPSA. The segment at 260-606 is interaction with PPP1R8; it reads RKKDKQHLKR…NKKGKTVGFG (347 aa). 2 positions are modified to phosphoserine: S303 and S358. T377, T385, T396, T404, T411, and T415 each carry phosphothreonine. Residues 409-418 are compositionally biased toward polar residues; that stretch reads LSTPFRTPSH. Positions 409–459 are disordered; that stretch reads LSTPFRTPSHGSEGLTPRSGTTPKPVINSTPGRTPLRDKLNINPEDGMADY. S417 is modified (phosphoserine). T424 and T430 each carry phosphothreonine. Over residues 426–440 the composition is skewed to polar residues; that stretch reads RSGTTPKPVINSTPG. Position 437 is a phosphoserine (S437). Phosphothreonine occurs at positions 438 and 442. Residue K487 forms a Glycyl lysine isopeptide (Lys-Gly) (interchain with G-Cter in SUMO2) linkage. The interval 501–659 is interaction with DAPK3; it reads ELEEREIDDT…GELSSEAYNQ (159 aa). Coiled-coil stretches lie at residues 676–701 and 764–802; these read RYTR…INRG and PRRL…KAKF. The segment at 706–800 is interaction with PLRG1; sequence EAKRAAKMEK…LLLEKETLKA (95 aa).

This sequence belongs to the CEF1 family. In terms of assembly, homodimer. Interacts with DAPK3. Component of the precatalytic, catalytic and postcatalytic spliceosome complexes. Part of a spliceosomal 'core' complex consisting of CDC5L, PLRG1, SPF27, CCAP1, CCAP3 and CCAP6. Interacts with PLRG1, Lodestar/TTF2, and NIPP1/PPP1R8. Component of the minor spliceosome, which splices U12-type introns. Within this complex, interacts with SCNM1. Component of the PRP19-CDC5L splicing complex composed of a core complex comprising a homotetramer of PRPF19, CDC5L, PLRG1 and BCAS2, and at least three less stably associated proteins CTNNBL1, CWC15 and HSPA8. Interacts (via its C-terminus) directly in the complex with PRPF19 and BCAS2. Interacts (via its C-terminus) directly with PRGL1 (via its WD40 repeat domain); the interaction is required for mRNA splicing but not for spliceosome assembly. Also interacts with CTNNBL1. Interacts with PRPF19 (via N-terminus). Interacts with USB1. Interacts with DDX41. In terms of processing, phosphorylated on serine and threonine residues. Phosphorylation on Thr-411 and Thr-438 is required for CDC5L-mediated mRNA splicing. Has no effect on subcellular location nor on homodimerization. Phosphorylated in vitro by CDK2. Phosphorylation enhances interaction with PPP1R8.

It is found in the nucleus. The protein resides in the nucleus speckle. It localises to the cytoplasm. DNA-binding protein involved in cell cycle control. May act as a transcription activator. Plays a role in pre-mRNA splicing as core component of precatalytic, catalytic and postcatalytic spliceosomal complexes. Component of the PRP19-CDC5L complex that forms an integral part of the spliceosome and is required for activating pre-mRNA splicing. The PRP19-CDC5L complex may also play a role in the response to DNA damage (DDR). As a component of the minor spliceosome, involved in the splicing of U12-type introns in pre-mRNAs. The chain is Cell division cycle 5-like protein (CDC5L) from Bos taurus (Bovine).